The sequence spans 105 residues: Thioredoxin (105 aa).

In terms of domain architecture, Thioredoxin spans 2–105; it reads VKIVGDLTEF…KLEEAIKKYM (104 aa). Catalysis depends on nucleophile residues cysteine 32 and cysteine 35. Cysteines 32 and 35 form a disulfide. 2 positions are modified to S-nitrosocysteine: cysteine 69 and cysteine 73.

It belongs to the thioredoxin family. In terms of processing, may be nitrosylated on several cysteine residues, depending on the oxidation state. Nitrosylated Cys-73 may serve as donor for nitrosylation of target proteins.

Its subcellular location is the nucleus. The protein localises to the cytoplasm. The protein resides in the secreted. Participates in various redox reactions through the reversible oxidation of its active center dithiol to a disulfide and catalyzes dithiol-disulfide exchange reactions. Plays a role in the reversible S-nitrosylation of cysteine residues in target proteins, and thereby contributes to the response to intracellular nitric oxide. Nitrosylates the active site Cys of CASP3 in response to nitric oxide (NO), and thereby inhibits caspase-3 activity. Induces the FOS/JUN AP-1 DNA binding activity in ionizing radiation (IR) cells through its oxidation/reduction status and stimulates AP-1 transcriptional activity. The protein is Thioredoxin (TXN) of Ophiophagus hannah (King cobra).